Consider the following 288-residue polypeptide: Light-independent protochlorophyllide reductase iron-sulfur ATP-binding protein (288 aa).

ATP contacts are provided by residues 10 to 15 (GIGKST) and K39. S14 is a Mg(2+) binding site. Residues C95 and C129 each contribute to the [4Fe-4S] cluster site. 180 to 181 (NR) is a binding site for ATP.

Belongs to the NifH/BchL/ChlL family. As to quaternary structure, homodimer. Protochlorophyllide reductase is composed of three subunits; ChlL, ChlN and ChlB. Requires [4Fe-4S] cluster as cofactor.

The catalysed reaction is chlorophyllide a + oxidized 2[4Fe-4S]-[ferredoxin] + 2 ADP + 2 phosphate = protochlorophyllide a + reduced 2[4Fe-4S]-[ferredoxin] + 2 ATP + 2 H2O. It functions in the pathway porphyrin-containing compound metabolism; chlorophyll biosynthesis (light-independent). In terms of biological role, component of the dark-operative protochlorophyllide reductase (DPOR) that uses Mg-ATP and reduced ferredoxin to reduce ring D of protochlorophyllide (Pchlide) to form chlorophyllide a (Chlide). This reaction is light-independent. The L component serves as a unique electron donor to the NB-component of the complex, and binds Mg-ATP. This is Light-independent protochlorophyllide reductase iron-sulfur ATP-binding protein from Trichodesmium erythraeum (strain IMS101).